A 37-amino-acid polypeptide reads, in one-letter code: Cytochrome b6-f complex subunit 5 (37 aa).

Residues 5-25 traverse the membrane as a helical segment; the sequence is LLDGLVLGLVFATLGGLFYAA.

This sequence belongs to the PetG family. In terms of assembly, the 4 large subunits of the cytochrome b6-f complex are cytochrome b6, subunit IV (17 kDa polypeptide, PetD), cytochrome f and the Rieske protein, while the 4 small subunits are PetG, PetL, PetM and PetN. The complex functions as a dimer.

It is found in the cellular thylakoid membrane. Functionally, component of the cytochrome b6-f complex, which mediates electron transfer between photosystem II (PSII) and photosystem I (PSI), cyclic electron flow around PSI, and state transitions. PetG is required for either the stability or assembly of the cytochrome b6-f complex. This is Cytochrome b6-f complex subunit 5 from Mastigocladus laminosus (Fischerella sp.).